The following is a 328-amino-acid chain: Probable cell division protein WhiA (328 aa).

The segment at residues 275-308 is a DNA-binding region (H-T-H motif); the sequence is SLEELGQLHDPVLTKDAIAGRIRRLLAMADKRAE.

This sequence belongs to the WhiA family.

Its function is as follows. Involved in cell division and chromosome segregation. This Nocardioides sp. (strain ATCC BAA-499 / JS614) protein is Probable cell division protein WhiA.